The following is a 251-amino-acid chain: Imidazole glycerol phosphate synthase subunit HisF (251 aa).

Active-site residues include Asp12 and Asp131.

It belongs to the HisA/HisF family. Heterodimer of HisH and HisF.

It localises to the cytoplasm. The catalysed reaction is 5-[(5-phospho-1-deoxy-D-ribulos-1-ylimino)methylamino]-1-(5-phospho-beta-D-ribosyl)imidazole-4-carboxamide + L-glutamine = D-erythro-1-(imidazol-4-yl)glycerol 3-phosphate + 5-amino-1-(5-phospho-beta-D-ribosyl)imidazole-4-carboxamide + L-glutamate + H(+). It participates in amino-acid biosynthesis; L-histidine biosynthesis; L-histidine from 5-phospho-alpha-D-ribose 1-diphosphate: step 5/9. Functionally, IGPS catalyzes the conversion of PRFAR and glutamine to IGP, AICAR and glutamate. The HisF subunit catalyzes the cyclization activity that produces IGP and AICAR from PRFAR using the ammonia provided by the HisH subunit. The protein is Imidazole glycerol phosphate synthase subunit HisF of Streptomyces griseus subsp. griseus (strain JCM 4626 / CBS 651.72 / NBRC 13350 / KCC S-0626 / ISP 5235).